The primary structure comprises 329 residues: Serpentine receptor class alpha-6 (329 aa).

The next 7 membrane-spanning stretches (helical) occupy residues 26-46 (VDLL…KIVI), 68-88 (LYQI…FFML), 104-124 (YFKV…GLLI), 143-163 (IGVC…FIIL), 187-207 (NLFS…SIFI), 238-258 (ICFL…GILI), and 273-293 (FWIA…VLLI).

Belongs to the nematode receptor-like protein sra family.

The protein resides in the membrane. This Caenorhabditis elegans protein is Serpentine receptor class alpha-6 (sra-6).